The sequence spans 808 residues: PH domain-containing protein DDB_G0275795 (808 aa).

Residues 57–121 (ENLEILKEIK…RNRQASQQEL (65 aa)) adopt a coiled-coil conformation. Residues 108–120 (ESTTRNRQASQQE) show a composition bias toward polar residues. Disordered stretches follow at residues 108–127 (ESTT…PPIL), 228–325 (GANA…QDEE), 339–375 (EKLK…QLQS), 405–475 (QQQQ…NGSN), 523–542 (DQTK…ELKK), and 645–675 (KGGG…SNTD). One can recognise a PH domain in the interval 124–216 (PPILSGYLKK…WTEGLKEFKK (93 aa)). The span at 228 to 248 (GANANGNGNSSPNMSSSGSYS) shows a compositional bias: low complexity. Over residues 255–274 (ESSQQPLNSSTGAINTTPQR) the composition is skewed to polar residues. Positions 293–321 (SHSSSSTAPDSPTLSSSYVPPPSSSNLNP) are enriched in low complexity. Residues 322 to 412 (QDEELKRREN…QQQQQQQQQQ (91 aa)) are a coiled coil. Residues 339 to 353 (EKLKQQDDQQQDDKQ) are compositionally biased toward basic and acidic residues. 2 stretches are compositionally biased toward low complexity: residues 354 to 375 (QQQQ…QLQS) and 405 to 414 (QQQQQQQQPP). The span at 417–428 (SPQNSRHGSTNY) shows a compositional bias: polar residues. Low complexity predominate over residues 429–449 (SQLQQQQQQPQQQPQQQSSPQ). The segment covering 450–475 (VIISNNNSPRFESQQQQNNFHNNGSN) has biased composition (polar residues). Positions 487–645 (DELNKKFLKE…DKYINELLEK (159 aa)) form a coiled coil. Residues 525–542 (TKTDAEEKQNKSSNELKK) show a composition bias toward basic and acidic residues. Residues 654–673 (NSNNNNNSNNNNNNSNNNSN) show a composition bias toward low complexity. A coiled-coil region spans residues 678–734 (KESMVAHQTQNAFLLQEIQRLETQSQFKLDIKIQQIEELENQLEQQLYQFHRFREAI).

This is PH domain-containing protein DDB_G0275795 from Dictyostelium discoideum (Social amoeba).